A 538-amino-acid chain; its full sequence is uncharacterized protein (538 aa).

Disordered stretches follow at residues 20 to 71 (RLSA…GGAQ), 151 to 211 (LWAE…EHPK), 288 to 331 (MLQP…QQHK), and 458 to 482 (EFEKASKLTGPGEASSGVGHSLKNY). Positions 154 to 171 (ESEKSESKGTRRDFRSYD) are enriched in basic and acidic residues.

This is an uncharacterized protein from Homo sapiens (Human).